The primary structure comprises 450 residues: MYKSLSLDLTKTKPFLNDYEVEQLQPMVSAAHKLLHEKTGAGNDFLGWIDLPVNYDKDEFARIKKSAEKIRNNSEALIVIGIGGSYLGARAAIEMLTHTFGNVASKEARKAPQIFYAGNNISSTYMADLIETVKDMDFSVNVISKSGTTTEPAIAFRIFKDLLEKKYGKEGAKERIFATTDKAKGALRTLADSEGYETFVIPDDVGGRYSVLTAVGLLPIATAGVDIDEMMKGAADAREEYSTDDLSKNTAYRYAAARNALYNKGKNIEMMVNFEPCLHYIGEWWKQLFGESEGKDHKGIFPAAADFSTDLHSMGQYIQEGLRTLVETHLNVEKPRKSVIIEANEDNLDGLNFLAGKDMDYVNNQAFRGTVIAHNEGEVPNMIINIPELTPYYFGYLVYFFEKSCALSGYLLGVNPFNQPGVEAYKKNMFALLGKPGYEDMKAEIEAKLQ.

The Proton donor role is filled by glutamate 291. Catalysis depends on residues histidine 312 and lysine 426.

It belongs to the GPI family.

It localises to the cytoplasm. The enzyme catalyses alpha-D-glucose 6-phosphate = beta-D-fructose 6-phosphate. It functions in the pathway carbohydrate biosynthesis; gluconeogenesis. Its pathway is carbohydrate degradation; glycolysis; D-glyceraldehyde 3-phosphate and glycerone phosphate from D-glucose: step 2/4. Catalyzes the reversible isomerization of glucose-6-phosphate to fructose-6-phosphate. The chain is Glucose-6-phosphate isomerase from Clostridium novyi (strain NT).